The chain runs to 172 residues: Stellate orphon protein at 12D (172 aa).

The protein belongs to the casein kinase 2 subunit beta family. In terms of assembly, interacts in vitro with the casein kinase 2 alpha subunit (CkII-alpha). The relevance of such interaction is however unclear in vivo. Probably not expressed in wild-type flies. In males lacking the Y chromosome, it is testis-specific and constitutes the main component of star-shaped crystals.

Unknown. In males lacking the Y chromosome, its strong overexpression leads to the appearance of proteinaceous star-shaped crystals in the primary spermatocytes causing meiotic drive, possibly by interfering with normal casein kinase 2 activity. This chain is Stellate orphon protein at 12D (Ste12DOR), found in Drosophila melanogaster (Fruit fly).